Here is a 144-residue protein sequence, read N- to C-terminus: AP-4 complex subunit sigma-1 (144 aa).

The protein belongs to the adaptor complexes small subunit family. In terms of assembly, adaptor protein complex 4 (AP-4) is a heterotetramer composed of two large adaptins (epsilon-type subunit AP4E1 and beta-type subunit AP4B1), a medium adaptin (mu-type subunit AP4M1) and a small adaptin (sigma-type AP4S1).

The protein localises to the golgi apparatus. Its subcellular location is the trans-Golgi network membrane. In terms of biological role, component of the adaptor protein complex 4 (AP-4). Adaptor protein complexes are vesicle coat components involved both in vesicle formation and cargo selection. They control the vesicular transport of proteins in different trafficking pathways. AP-4 forms a non clathrin-associated coat on vesicles departing the trans-Golgi network (TGN) and may be involved in the targeting of proteins from the trans-Golgi network (TGN) to the endosomal-lysosomal system. It is also involved in protein sorting to the basolateral membrane in epithelial cells and the proper asymmetric localization of somatodendritic proteins in neurons. AP-4 is involved in the recognition and binding of tyrosine-based sorting signals found in the cytoplasmic part of cargos, but may also recognize other types of sorting signal. The protein is AP-4 complex subunit sigma-1 of Mus musculus (Mouse).